The sequence spans 280 residues: Eukaryotic translation initiation factor 3 subunit F-1 (280 aa).

Residues 8 to 138 form the MPN domain; that stretch reads VRVHPVVLFQ…LRAYVCIQLG (131 aa).

Belongs to the eIF-3 subunit F family. In terms of assembly, component of the eukaryotic translation initiation factor 3 (eIF-3) complex. The eIF-3 complex interacts with pix.

Its subcellular location is the cytoplasm. Its function is as follows. Component of the eukaryotic translation initiation factor 3 (eIF-3) complex, which is involved in protein synthesis of a specialized repertoire of mRNAs and, together with other initiation factors, stimulates binding of mRNA and methionyl-tRNAi to the 40S ribosome. The eIF-3 complex specifically targets and initiates translation of a subset of mRNAs involved in cell proliferation. The polypeptide is Eukaryotic translation initiation factor 3 subunit F-1 (Drosophila virilis (Fruit fly)).